The following is a 559-amino-acid chain: Myb/SANT-like DNA-binding domain-containing protein 2 (559 aa).

The interval 1-62 (MAAPCGSELP…GSAAGSGAAA (62 aa)) is disordered. Phosphoserine occurs at positions 13, 24, 27, 32, and 48. Residues 46–61 (GASPLGPGSAAGSGAA) are compositionally biased toward low complexity. The region spanning 103–173 (SWTPAETNAL…QCRERIKTLR (71 aa)) is the Myb-like domain. Glycyl lysine isopeptide (Lys-Gly) (interchain with G-Cter in SUMO2) cross-links involve residues Lys268 and Lys343. Position 436 is a phosphoserine (Ser436).

The protein is Myb/SANT-like DNA-binding domain-containing protein 2 (Msantd2) of Mus musculus (Mouse).